The following is a 689-amino-acid chain: DNA-directed RNA polymerase subunit beta' (689 aa).

Residues Cys-76, Cys-78, Cys-94, and Cys-97 each contribute to the Zn(2+) site. The Mg(2+) site is built by Asp-496, Asp-498, and Asp-500.

The protein belongs to the RNA polymerase beta' chain family. RpoC1 subfamily. In plastids the minimal PEP RNA polymerase catalytic core is composed of four subunits: alpha, beta, beta', and beta''. When a (nuclear-encoded) sigma factor is associated with the core the holoenzyme is formed, which can initiate transcription. The cofactor is Mg(2+). Zn(2+) is required as a cofactor.

The protein resides in the plastid. It is found in the chloroplast. The enzyme catalyses RNA(n) + a ribonucleoside 5'-triphosphate = RNA(n+1) + diphosphate. In terms of biological role, DNA-dependent RNA polymerase catalyzes the transcription of DNA into RNA using the four ribonucleoside triphosphates as substrates. This chain is DNA-directed RNA polymerase subunit beta', found in Illicium oligandrum (Star anise).